A 184-amino-acid chain; its full sequence is Bcl-2-modifying factor (184 aa).

The interaction with DLC2 stretch occupies residues Asp67 to Pro75. The BH3 motif lies at Ile133 to Leu147.

The protein belongs to the Bcl-2 family. As to quaternary structure, interacts with MCL1, BCL2, BCL2L1/BCL-Xl, BCL2A1 and BCL2L2/BCL-w. Interacts with the myosin V actin motor complex through its binding to DLC2. Isoform 1 is mainly expressed in B-lymphoid cells. Isoform 2 and isoform 3 are mainly expressed in B-CLL and normal B-cells.

May play a role in apoptosis. Isoform 1 seems to be the main initiator. The polypeptide is Bcl-2-modifying factor (BMF) (Homo sapiens (Human)).